The sequence spans 366 residues: tRNA-specific 2-thiouridylase MnmA (366 aa).

ATP is bound by residues 6–13 (GLSGGVDS) and Met-32. Catalysis depends on Cys-96, which acts as the Nucleophile. Cys-96 and Cys-196 form a disulfide bridge. Gly-120 lines the ATP pocket. The tract at residues 146 to 148 (KDQ) is interaction with tRNA. Catalysis depends on Cys-196, which acts as the Cysteine persulfide intermediate. The interval 302–303 (RY) is interaction with tRNA.

This sequence belongs to the MnmA/TRMU family.

It localises to the cytoplasm. The catalysed reaction is S-sulfanyl-L-cysteinyl-[protein] + uridine(34) in tRNA + AH2 + ATP = 2-thiouridine(34) in tRNA + L-cysteinyl-[protein] + A + AMP + diphosphate + H(+). In terms of biological role, catalyzes the 2-thiolation of uridine at the wobble position (U34) of tRNA, leading to the formation of s(2)U34. The sequence is that of tRNA-specific 2-thiouridylase MnmA from Treponema denticola (strain ATCC 35405 / DSM 14222 / CIP 103919 / JCM 8153 / KCTC 15104).